Here is a 411-residue protein sequence, read N- to C-terminus: MMP alpha-(1-&gt;4)-mannosyltransferase (411 aa).

Belongs to the glycosyltransferase group 1 family. Glycosyltransferase 4 subfamily.

It catalyses the reaction [3-O-methyl-alpha-D-mannosyl-(1-&gt;4)](n)-3-O-methyl-D-mannose + GDP-alpha-D-mannose = alpha-D-mannosyl-(1-&gt;4)-[3-O-methyl-alpha-D-mannosyl-(1-&gt;4)](n)-3-O-methyl-D-mannose + GDP + H(+). The catalysed reaction is [3-O-methyl-alpha-D-mannosyl-(1-&gt;4)](n)-1-O,3-O-dimethyl-alpha-D-mannose + GDP-alpha-D-mannose = alpha-D-mannosyl-(1-&gt;4)-[3-O-methyl-alpha-D-mannosyl-(1-&gt;4)](n)-1-O,3-O-dimethyl-alpha-D-mannose + GDP + H(+). Its activity is regulated as follows. Activity is significantly enhanced in the presence of Mg(2+). In terms of biological role, glycosyltransferase involved in the biosynthesis of 3-O-methylmannose polysaccharides (MMP), which are intracellular polymethylated polysaccharides implicated in the modulation of fatty acid metabolism in non-tuberculous mycobacteria. Highly specific alpha-(1-&gt;4)-mannosyltransferase that can transfer mannose units from GDP-mannose to a wide range of alpha-(1-&gt;4) oligomannosides longer than three mannoses, including all hydrolytic products of MmpH. Can use synthetic trimannosides and tetramannosides as substrates, but not mono- and disaccharides, and is significantly more active with the methylated substrates, preferring the tetramannosides over the trimannosides. The chain is MMP alpha-(1-&gt;4)-mannosyltransferase from Mycolicibacterium hassiacum (strain DSM 44199 / CIP 105218 / JCM 12690 / 3849) (Mycobacterium hassiacum).